The primary structure comprises 349 residues: Putative transport protein jhp_0514 (349 aa).

8 consecutive transmembrane segments (helical) span residues 6–26, 27–47, 56–76, 143–163, 195–215, 224–244, 258–278, and 300–320; these read FFWI…QDFL, MDAL…VFLN, SFLC…FIVY, LKLV…FYYG, VLLT…TMII, LGIL…LIWI, EAIF…DSVI, and ILIF…GIIV.

The protein belongs to the autoinducer-2 exporter (AI-2E) (TC 2.A.86) family.

The protein resides in the cell membrane. The chain is Putative transport protein jhp_0514 from Helicobacter pylori (strain J99 / ATCC 700824) (Campylobacter pylori J99).